The primary structure comprises 105 residues: Urease subunit beta (105 aa).

The protein belongs to the urease beta subunit family. Heterotrimer of UreA (gamma), UreB (beta) and UreC (alpha) subunits. Three heterotrimers associate to form the active enzyme.

The protein localises to the cytoplasm. The enzyme catalyses urea + 2 H2O + H(+) = hydrogencarbonate + 2 NH4(+). It participates in nitrogen metabolism; urea degradation; CO(2) and NH(3) from urea (urease route): step 1/1. This Pseudomonas putida (strain GB-1) protein is Urease subunit beta.